The following is a 447-amino-acid chain: Tubulin beta chain (447 aa).

Residues glutamine 11, glutamate 69, serine 138, glycine 142, threonine 143, glycine 144, asparagine 204, and asparagine 226 each coordinate GTP. Glutamate 69 is a binding site for Mg(2+). The disordered stretch occupies residues 424–447 (QYQEASVSEGEEEYDEEAPLEGEE). Acidic residues predominate over residues 432–447 (EGEEEYDEEAPLEGEE).

It belongs to the tubulin family. As to quaternary structure, dimer of alpha and beta chains. A typical microtubule is a hollow water-filled tube with an outer diameter of 25 nm and an inner diameter of 15 nM. Alpha-beta heterodimers associate head-to-tail to form protofilaments running lengthwise along the microtubule wall with the beta-tubulin subunit facing the microtubule plus end conferring a structural polarity. Microtubules usually have 13 protofilaments but different protofilament numbers can be found in some organisms and specialized cells. The cofactor is Mg(2+).

The protein resides in the cytoplasm. Its subcellular location is the cytoskeleton. Tubulin is the major constituent of microtubules, a cylinder consisting of laterally associated linear protofilaments composed of alpha- and beta-tubulin heterodimers. Microtubules grow by the addition of GTP-tubulin dimers to the microtubule end, where a stabilizing cap forms. Below the cap, tubulin dimers are in GDP-bound state, owing to GTPase activity of alpha-tubulin. The chain is Tubulin beta chain (TUB1) from Dothistroma septosporum (Red band needle blight fungus).